Reading from the N-terminus, the 291-residue chain is 4,5:9,10-diseco-3-hydroxy-5,9,17-trioxoandrosta-1(10),2-diene-4-oate hydrolase (291 aa).

Substrate is bound by residues 45-46 (GG), Asn54, Asn113, Leu115, and Arg192. The active-site Proton acceptor is His269. Position 270 (Trp270) interacts with substrate.

Belongs to the AB hydrolase superfamily. HsaD family. Homodimer.

It catalyses the reaction (1E,2Z)-3-hydroxy-5,9,17-trioxo-4,5:9,10-disecoandrosta-1(10),2-dien-4-oate + H2O = 3-[(3aS,4S,7aS)-7a-methyl-1,5-dioxo-octahydro-1H-inden-4-yl]propanoate + (2Z,4Z)-2-hydroxyhexa-2,4-dienoate + H(+). It carries out the reaction 2,6-dioxo-6-phenylhexa-3-enoate + H2O = 2-oxopent-4-enoate + benzoate + H(+). It participates in lipid metabolism; steroid biosynthesis. In terms of biological role, catalyzes the hydrolysis of a carbon-carbon bond in 4,5: 9,10-diseco-3-hydroxy-5,9,17-trioxoandrosta-1(10),2-diene-4-oate (4,9-DSHA) to yield 9,17-dioxo-1,2,3,4,10,19-hexanorandrostan-5-oate (DOHNAA) and 2-hydroxy-hexa-2,4-dienoate (HHD). Is also able to catalyze the hydrolysis of 2-hydroxy-6-oxo-6-phenylhexa-2,4-dienoic acid (HOPDA) and the synthetic analog 8-(2-chlorophenyl)-2-hydroxy-5-methyl-6-oxoocta-2,4-dienoic acid (HOPODA). This is 4,5:9,10-diseco-3-hydroxy-5,9,17-trioxoandrosta-1(10),2-diene-4-oate hydrolase (hsaD) from Mycobacterium tuberculosis (strain ATCC 25618 / H37Rv).